The chain runs to 227 residues: Cytidylate kinase (227 aa).

12–20 contributes to the ATP binding site; it reads GPSGAGKGT.

It belongs to the cytidylate kinase family. Type 1 subfamily.

The protein localises to the cytoplasm. It catalyses the reaction CMP + ATP = CDP + ADP. The enzyme catalyses dCMP + ATP = dCDP + ADP. The polypeptide is Cytidylate kinase (Xanthomonas euvesicatoria pv. vesicatoria (strain 85-10) (Xanthomonas campestris pv. vesicatoria)).